Reading from the N-terminus, the 217-residue chain is Small ribosomal subunit protein uS3 (217 aa).

The KH type-2 domain maps to 40 to 110 (IRELVNKSFT…EVYINIHEVR (71 aa)).

The protein belongs to the universal ribosomal protein uS3 family. In terms of assembly, part of the 30S ribosomal subunit. Forms a tight complex with proteins S10 and S14.

Functionally, binds the lower part of the 30S subunit head. Binds mRNA in the 70S ribosome, positioning it for translation. The chain is Small ribosomal subunit protein uS3 from Rickettsia bellii (strain OSU 85-389).